A 344-amino-acid chain; its full sequence is Tetraacyldisaccharide 4'-kinase (344 aa).

65–72 (HAGGTGKT) lines the ATP pocket.

The protein belongs to the LpxK family.

It catalyses the reaction a lipid A disaccharide + ATP = a lipid IVA + ADP + H(+). It functions in the pathway glycolipid biosynthesis; lipid IV(A) biosynthesis; lipid IV(A) from (3R)-3-hydroxytetradecanoyl-[acyl-carrier-protein] and UDP-N-acetyl-alpha-D-glucosamine: step 6/6. In terms of biological role, transfers the gamma-phosphate of ATP to the 4'-position of a tetraacyldisaccharide 1-phosphate intermediate (termed DS-1-P) to form tetraacyldisaccharide 1,4'-bis-phosphate (lipid IVA). The sequence is that of Tetraacyldisaccharide 4'-kinase from Neisseria meningitidis serogroup C / serotype 2a (strain ATCC 700532 / DSM 15464 / FAM18).